The chain runs to 590 residues: Monoterepene synthase TPS1, chloropastic (590 aa).

The N-terminal 42 residues, 1 to 42 (MALNTFLHFPPCSLSSFSCAVPKLPLAIFHKTMARQIRCPRA), are a transit peptide targeting the chloroplast. Residues Arg-304, Asp-341, Asp-345, Arg-483, and Asp-486 each contribute to the (2E)-geranyl diphosphate site. Mg(2+) contacts are provided by Asp-341 and Asp-345. Positions 341–345 (DDMYD) match the DDXXD motif motif. Asp-486, Thr-490, and Glu-494 together coordinate Mg(2+).

The protein belongs to the terpene synthase family. Tpsb subfamily. Monomer. Requires Mg(2+) as cofactor.

Its subcellular location is the plastid. It localises to the chloroplast. The enzyme catalyses (2E)-geranyl diphosphate = beta-thujene + diphosphate. It catalyses the reaction (2E)-geranyl diphosphate = sabinene + diphosphate. It carries out the reaction (2E)-geranyl diphosphate = beta-pinene + diphosphate. The catalysed reaction is (2E)-geranyl diphosphate = alpha-terpinene + diphosphate. It participates in secondary metabolite biosynthesis; terpenoid biosynthesis. Functionally, monoterpene synthase involved in the biosynthesis of volatile organic compounds. Mediates the conversion of (2E)-geranyl diphosphate (GPP) into beta-thujene, sabinene, beta-pinene and alpha-terpinene. Does not use (2E,6E)-farnesyl diphosphate (FPP) as substrate. In Cananga odorata (Ylang-ylang tree), this protein is Monoterepene synthase TPS1, chloropastic.